The chain runs to 165 residues: Nucleotide-binding protein Tfu_2672 (165 aa).

It belongs to the YajQ family.

Nucleotide-binding protein. This Thermobifida fusca (strain YX) protein is Nucleotide-binding protein Tfu_2672.